The primary structure comprises 274 residues: Erythronate-4-phosphate dehydrogenase (274 aa).

D34 provides a ligand contact to NAD(+). The active site involves R95. D119 lines the NAD(+) pocket. Residue E124 is part of the active site. The active-site Proton donor is H141. Residue G144 coordinates NAD(+). Substrate is bound at residue Y145.

It belongs to the D-isomer specific 2-hydroxyacid dehydrogenase family. PdxB subfamily. Homodimer.

It localises to the cytoplasm. It carries out the reaction 4-phospho-D-erythronate + NAD(+) = (R)-3-hydroxy-2-oxo-4-phosphooxybutanoate + NADH + H(+). Its pathway is cofactor biosynthesis; pyridoxine 5'-phosphate biosynthesis; pyridoxine 5'-phosphate from D-erythrose 4-phosphate: step 2/5. Functionally, catalyzes the oxidation of erythronate-4-phosphate to 3-hydroxy-2-oxo-4-phosphonooxybutanoate. This is Erythronate-4-phosphate dehydrogenase (pdxB) from Shewanella sp. (strain DB6705).